Consider the following 130-residue polypeptide: Trypsin inhibitor (130 aa).

Residues 27–49 (LHKQARQSGSGPSPQGPQQRPPL) form a disordered region. Positions 32-49 (RQSGSGPSPQGPQQRPPL) are enriched in low complexity.

This sequence belongs to the 2S seed storage albumins family. As to quaternary structure, the protein consists of two chains linked by disulfide bonds.

Functionally, inhibits trypsin with a Ki of 7 x 10(-6) M. This chain is Trypsin inhibitor, found in Mutarda arvensis (Charlock mustard).